Consider the following 341-residue polypeptide: Enduracididine beta-hydroxylase (341 aa).

H146 and E148 together coordinate Fe cation. Positions 203–223 (HRIHGKAPGDESARESALRER) are disordered. A Fe cation-binding site is contributed by H300.

Belongs to the clavaminate synthase family. The cofactor is Fe(2+).

It carries out the reaction L-enduracididine + 2-oxoglutarate + O2 = (3S)-3-hydroxy-L-enduracididine + succinate + CO2. It functions in the pathway antibiotic biosynthesis. Hydroxylates the beta carbon of free L-enduracididine to produce (3S)-3-hydroxy-L-enduracididine in biosynthesis of the nonproteinogenic amino acid beta-hydroxyenduracididine, a component of antibiotic mannopeptimycin. The sequence is that of Enduracididine beta-hydroxylase (mppO) from Streptomyces hygroscopicus.